Reading from the N-terminus, the 484-residue chain is Protein nucleotidyltransferase YdiU (484 aa).

ATP is bound by residues glycine 81, glycine 83, arginine 84, lysine 103, aspartate 115, glycine 116, arginine 166, and arginine 173. Aspartate 244 (proton acceptor) is an active-site residue. Residues asparagine 245 and aspartate 254 each coordinate Mg(2+). Aspartate 254 is an ATP binding site.

The protein belongs to the SELO family. The cofactor is Mg(2+). Mn(2+) is required as a cofactor.

It carries out the reaction L-seryl-[protein] + ATP = 3-O-(5'-adenylyl)-L-seryl-[protein] + diphosphate. It catalyses the reaction L-threonyl-[protein] + ATP = 3-O-(5'-adenylyl)-L-threonyl-[protein] + diphosphate. The catalysed reaction is L-tyrosyl-[protein] + ATP = O-(5'-adenylyl)-L-tyrosyl-[protein] + diphosphate. The enzyme catalyses L-histidyl-[protein] + UTP = N(tele)-(5'-uridylyl)-L-histidyl-[protein] + diphosphate. It carries out the reaction L-seryl-[protein] + UTP = O-(5'-uridylyl)-L-seryl-[protein] + diphosphate. It catalyses the reaction L-tyrosyl-[protein] + UTP = O-(5'-uridylyl)-L-tyrosyl-[protein] + diphosphate. In terms of biological role, nucleotidyltransferase involved in the post-translational modification of proteins. It can catalyze the addition of adenosine monophosphate (AMP) or uridine monophosphate (UMP) to a protein, resulting in modifications known as AMPylation and UMPylation. The sequence is that of Protein nucleotidyltransferase YdiU from Shewanella oneidensis (strain ATCC 700550 / JCM 31522 / CIP 106686 / LMG 19005 / NCIMB 14063 / MR-1).